A 496-amino-acid polypeptide reads, in one-letter code: Glutamate--cysteine ligase B, chloroplastic (496 aa).

Residues 1–34 constitute a chloroplast transit peptide; sequence MAVASRLAVARVAPDGGAAGRRRRRRGRPVVAVP. Residues 14-53 are disordered; the sequence is PDGGAAGRRRRRRGRPVVAVPTAAGRGRGRGGAVAASPPT. A compositionally biased stretch (low complexity) spans 29–38; that stretch reads PVVAVPTAAG. Cysteines 160 and 380 form a disulfide.

This sequence belongs to the carboxylate-amine ligase family. Glutamate--cysteine ligase type 2 subfamily. Homodimer or monomer when oxidized or reduced, respectively. Post-translationally, the Cys-160-Cys-380 disulfide bridge is known to modulate the enzyme activity according to the redox status. The oxidized form constitutes the active enzyme.

It is found in the plastid. The protein localises to the chloroplast. The catalysed reaction is L-cysteine + L-glutamate + ATP = gamma-L-glutamyl-L-cysteine + ADP + phosphate + H(+). Its pathway is sulfur metabolism; glutathione biosynthesis; glutathione from L-cysteine and L-glutamate: step 1/2. The protein is Glutamate--cysteine ligase B, chloroplastic (GSH1-2) of Oryza sativa subsp. japonica (Rice).